Reading from the N-terminus, the 1185-residue chain is Chromosome partition protein Smc (1185 aa).

Pro32 to Asn39 is a binding site for ATP. The stretch at Ile167–Ser494 forms a coiled coil. The SMC hinge domain maps to Thr521–Ala639. Residues Arg677–Met1031 are a coiled coil.

The protein belongs to the SMC family. As to quaternary structure, homodimer.

The protein localises to the cytoplasm. Required for chromosome condensation and partitioning. The polypeptide is Chromosome partition protein Smc (Halothermothrix orenii (strain H 168 / OCM 544 / DSM 9562)).